Consider the following 270-residue polypeptide: Oxidized low-density lipoprotein receptor 1 (270 aa).

Over residues 1-14 the composition is skewed to basic and acidic residues; that stretch reads MTVDDPKGMKDQLD. Residues 1-22 are disordered; sequence MTVDDPKGMKDQLDQKPNGKTA. The Cytoplasmic portion of the chain corresponds to 1–33; that stretch reads MTVDDPKGMKDQLDQKPNGKTAKGFVSSWRWYP. Residues 34-56 traverse the membrane as a helical; Signal-anchor for type II membrane protein segment; that stretch reads AAVTLGVLCLGLLVTVILLILQL. Residue C42 is the site of S-palmitoyl cysteine attachment. The neck stretch occupies residues 57–146; sequence SQVSDLIKKQ…SGPCPQDWLW (90 aa). Residues 57 to 270 are Extracellular-facing; that stretch reads SQVSDLIKKQ…QKKANLLRAQ (214 aa). Residues N69 and N135 are each glycosylated (N-linked (GlcNAc...) asparagine). The stretch at 85 to 135 forms a coiled coil; that stretch reads RRSEKSAQESQKELKEMIETLAHKLDEKSKKLMELHRQNLNLQEVLKEAAN. 3 disulfide bridges follow: C140/C151, C168/C260, and C239/C252. The region spanning 147-261 is the C-type lectin domain; that stretch reads HEENCYQFSS…CILTAFSICQ (115 aa).

As to quaternary structure, homodimer; disulfide-linked. May form a hexamer composed of 3 homodimers. Interacts with HSP70. In terms of processing, N-glycosylated. In terms of tissue distribution, highly expressed in endothelial cells, aortic intima and lung. Expressed at low level in other tissues.

The protein localises to the cell membrane. It is found in the membrane raft. The protein resides in the secreted. Its function is as follows. Receptor that mediates the recognition, internalization and degradation of oxidatively modified low density lipoprotein (oxLDL) by vascular endothelial cells. OxLDL is a marker of atherosclerosis that induces vascular endothelial cell activation and dysfunction, resulting in pro-inflammatory responses, pro-oxidative conditions and apoptosis. Its association with oxLDL induces the activation of NF-kappa-B through an increased production of intracellular reactive oxygen and a variety of pro-atherogenic cellular responses including a reduction of nitric oxide (NO) release, monocyte adhesion and apoptosis. In addition to binding oxLDL, it acts as a receptor for the HSP70 protein involved in antigen cross-presentation to naive T-cells in dendritic cells, thereby participating in cell-mediated antigen cross-presentation. Also involved in inflammatory process, by acting as a leukocyte-adhesion molecule at the vascular interface in endotoxin-induced inflammation. Also acts as a receptor for advanced glycation end (AGE) products, activated platelets, monocytes, apoptotic cells and both Gram-negative and Gram-positive bacteria. The chain is Oxidized low-density lipoprotein receptor 1 (OLR1) from Bos taurus (Bovine).